A 293-amino-acid chain; its full sequence is Elongation factor Ts (293 aa).

Positions 79–82 (TDFV) are involved in Mg(2+) ion dislocation from EF-Tu.

Belongs to the EF-Ts family.

The protein resides in the cytoplasm. Functionally, associates with the EF-Tu.GDP complex and induces the exchange of GDP to GTP. It remains bound to the aminoacyl-tRNA.EF-Tu.GTP complex up to the GTP hydrolysis stage on the ribosome. The sequence is that of Elongation factor Ts from Bacillus velezensis (strain DSM 23117 / BGSC 10A6 / LMG 26770 / FZB42) (Bacillus amyloliquefaciens subsp. plantarum).